A 498-amino-acid polypeptide reads, in one-letter code: MRMNPTTSGSGVSTLEKKNLGRIVQIIGPVLDVSFPSGKMPNIYNALVVQGRDTVGQAINVTCEVQQLLGNNRVRAVAMSATDGLMRGMEVIDTGAPLSVPVGGATLGRIFNVLGEPVDELGPVDTRTTSPIHRSAPAFIQLDTKLSIFETGIKVVDLLAPYRRGGKIGLFGGAGVGKTVLIMELINNIAKAHGGVSVFGGVGERTREGNDLYMEMKESGVINEENIAESKVALVYGQMNEPPGARMRVGLTALTMAEYFRDVNEQDVLLFIDNIFRFVQAGSEVSALLGRMPSAVGYQPTLSTEMGTLQERITSTKEGSITSIQAVYVPADDLTDPAPATTFAHLDATTVLSRGLAAKGIYPAVDPLDSTSTMLQPRIVGEEHYKIAQRVKQTLQRYKELQDIIAILGLDELSEEDRLTVARARKIERFLSQPFFVAEVFTGSPGKYVGLAETIRGFQLILSGELDGLPEQAFYLVGNIDEATAKAMNLEMESNLKK.

172–179 (GGAGVGKT) is a binding site for ATP.

The protein belongs to the ATPase alpha/beta chains family. In terms of assembly, F-type ATPases have 2 components, CF(1) - the catalytic core - and CF(0) - the membrane proton channel. CF(1) has five subunits: alpha(3), beta(3), gamma(1), delta(1), epsilon(1). CF(0) has four main subunits: a(1), b(1), b'(1) and c(9-12).

It localises to the plastid. It is found in the chloroplast thylakoid membrane. The enzyme catalyses ATP + H2O + 4 H(+)(in) = ADP + phosphate + 5 H(+)(out). Produces ATP from ADP in the presence of a proton gradient across the membrane. The catalytic sites are hosted primarily by the beta subunits. This Jasminum nudiflorum (Winter jasmine) protein is ATP synthase subunit beta, chloroplastic.